Here is a 142-residue protein sequence, read N- to C-terminus: Neuritin (142 aa).

The N-terminal stretch at 1 to 27 is a signal peptide; it reads MGLTLSGRYISLFLAVQIAYLLQAVRA. Residue A112 is the site of GPI-anchor amidated alanine attachment. Residues 113–142 constitute a propeptide, removed in mature form; the sequence is GGNGAIRSSVPFGVTLLITALSALVTWMQF.

This sequence belongs to the neuritin family.

The protein resides in the cell membrane. It is found in the synapse. Its function is as follows. Modulates postsynaptic dendritic arbor elaboration and synaptic maturation. The polypeptide is Neuritin (nrn1) (Danio rerio (Zebrafish)).